Consider the following 173-residue polypeptide: Transcription factor E (173 aa).

The region spanning 3–86 is the HTH TFE/IIEalpha-type domain; the sequence is DDPLVKSLLT…SWKFEEQEVI (84 aa).

This sequence belongs to the TFE family. In terms of assembly, monomer. Interaction with RNA polymerase subunits RpoF and RpoE is necessary for Tfe stimulatory transcription activity. Able to interact with Tbp and RNA polymerase in the absence of DNA promoter. Interacts both with the preinitiation and elongation complexes.

In terms of biological role, transcription factor that plays a role in the activation of archaeal genes transcribed by RNA polymerase. Facilitates transcription initiation by enhancing TATA-box recognition by TATA-box-binding protein (Tbp), and transcription factor B (Tfb) and RNA polymerase recruitment. Not absolutely required for transcription in vitro, but particularly important in cases where Tbp or Tfb function is not optimal. It dynamically alters the nucleic acid-binding properties of RNA polymerases by stabilizing the initiation complex and destabilizing elongation complexes. Seems to translocate with the RNA polymerase following initiation and acts by binding to the non template strand of the transcription bubble in elongation complexes. The chain is Transcription factor E from Methanobrevibacter smithii (strain ATCC 35061 / DSM 861 / OCM 144 / PS).